Reading from the N-terminus, the 313-residue chain is Ribosomal RNA small subunit methyltransferase H (313 aa).

Residues 35 to 37 (GGH), Asp-55, Phe-79, Asp-101, and Gln-108 contribute to the S-adenosyl-L-methionine site.

It belongs to the methyltransferase superfamily. RsmH family.

It is found in the cytoplasm. It carries out the reaction cytidine(1402) in 16S rRNA + S-adenosyl-L-methionine = N(4)-methylcytidine(1402) in 16S rRNA + S-adenosyl-L-homocysteine + H(+). In terms of biological role, specifically methylates the N4 position of cytidine in position 1402 (C1402) of 16S rRNA. The protein is Ribosomal RNA small subunit methyltransferase H of Salmonella typhi.